We begin with the raw amino-acid sequence, 194 residues long: Peptidyl-tRNA hydrolase (194 aa).

Tyrosine 17 lines the tRNA pocket. Catalysis depends on histidine 22, which acts as the Proton acceptor. TRNA contacts are provided by tyrosine 68, asparagine 70, and asparagine 116.

It belongs to the PTH family. As to quaternary structure, monomer.

Its subcellular location is the cytoplasm. The enzyme catalyses an N-acyl-L-alpha-aminoacyl-tRNA + H2O = an N-acyl-L-amino acid + a tRNA + H(+). Functionally, hydrolyzes ribosome-free peptidyl-tRNAs (with 1 or more amino acids incorporated), which drop off the ribosome during protein synthesis, or as a result of ribosome stalling. Its function is as follows. Catalyzes the release of premature peptidyl moieties from peptidyl-tRNA molecules trapped in stalled 50S ribosomal subunits, and thus maintains levels of free tRNAs and 50S ribosomes. This chain is Peptidyl-tRNA hydrolase, found in Pseudomonas syringae pv. syringae (strain B728a).